The sequence spans 303 residues: MAQITMSEMLKAGLQFGHQTRRWNPKMKQYILTERNGIYIINLFKTLDLIDVAYDFIKTTVAHNGTVLFVGTKKQAQEAIKNAATRVNMPYVSERWLGGMLTNFQTVSKRVNRLKELETMDFDDVHGSGLTKKELLLLKREKDKLERQLGGIRNMTRTPSAMFVVDINKEALAVEEAHKLGIPVVAIVDTNADPEAVEYPIPANDDAIRGIELLTNLFADAVAEGLLERSGNASKSESNSEQPMAAWEKELLEKNEKATLRENAVVTENEVKKTDEEEGASSEAARADAQNEEAVAKPGEEVE.

The interval 258–303 (ATLRENAVVTENEVKKTDEEEGASSEAARADAQNEEAVAKPGEEVE) is disordered. Over residues 294 to 303 (AVAKPGEEVE) the composition is skewed to basic and acidic residues.

The protein belongs to the universal ribosomal protein uS2 family.

This Bifidobacterium animalis subsp. lactis (strain AD011) protein is Small ribosomal subunit protein uS2.